The primary structure comprises 359 residues: MILNSSTEDGIKRIQDDCPKAGRHNYIFIMIPTLYSIIFVVGIFGNSLVVIVIYFYMKLKTVASVFLLNLALADLCFLLTLPLWAVYTAMEYRWPFGNYLCKIASASVSFNLYASVFLLTCLSIDRYLAIVHPMKSRLRRTMLVAKVTCIIIWLLAGLASLPTIIHRNVFFIENTNITVCAFHYESQNSTLPVGLGLTKNILGFLFPFLIILTSYTLIWKTLKKAYEIQKNKPRKDDIFKIILAIVLFFFFSWVPHQIFTFMDVLIQLGLIRDCKIEDIVDTAMPITICLAYFNNCLNPLFYGFLGKKFKKYFLQLLKYIPPKAKSHSNLSTKMSTLSYRPSENGNSSTKKPAPCIEVE.

The Extracellular portion of the chain corresponds to 1–25; it reads MILNSSTEDGIKRIQDDCPKAGRHN. N-linked (GlcNAc...) asparagine glycosylation occurs at Asn4. Positions 15 and 17 each coordinate angiotensin II. 2 disulfide bridges follow: Cys18–Cys274 and Cys101–Cys180. Residues 26-55 form a helical membrane-spanning segment; sequence YIFIMIPTLYSIIFVVGIFGNSLVVIVIYF. Residues 56–61 are Cytoplasmic-facing; it reads YMKLKT. Residues 62–89 traverse the membrane as a helical segment; sequence VASVFLLNLALADLCFLLTLPLWAVYTA. Over 90–98 the chain is Extracellular; sequence MEYRWPFGN. A helical membrane pass occupies residues 99–125; sequence YLCKIASASVSFNLYASVFLLTCLSID. Residues 126-141 are Cytoplasmic-facing; the sequence is RYLAIVHPMKSRLRRT. Residues 142–165 form a helical membrane-spanning segment; that stretch reads MLVAKVTCIIIWLLAGLASLPTII. Residues 166-190 lie on the Extracellular side of the membrane; sequence HRNVFFIENTNITVCAFHYESQNST. An angiotensin II-binding site is contributed by Arg167. N-linked (GlcNAc...) asparagine glycosylation occurs at Asn176. 3 residues coordinate angiotensin II: Phe182, His183, and Tyr184. Asn188 is a glycosylation site (N-linked (GlcNAc...) asparagine). The chain crosses the membrane as a helical span at residues 191-216; that stretch reads LPVGLGLTKNILGFLFPFLIILTSYT. Lys199 contacts angiotensin II. At 217-239 the chain is on the cytoplasmic side; the sequence is LIWKTLKKAYEIQKNKPRKDDIF. Residues 240–268 traverse the membrane as a helical segment; sequence KIILAIVLFFFFSWVPHQIFTFMDVLIQL. The Extracellular segment spans residues 269 to 278; it reads GLIRDCKIED. Residues 279–304 form a helical membrane-spanning segment; it reads IVDTAMPITICLAYFNNCLNPLFYGF. The Cytoplasmic segment spans residues 305-359; sequence LGKKFKKYFLQLLKYIPPKAKSHSNLSTKMSTLSYRPSENGNSSTKKPAPCIEVE. A compositionally biased stretch (polar residues) spans 336–350; that stretch reads TLSYRPSENGNSSTK. The disordered stretch occupies residues 336–359; sequence TLSYRPSENGNSSTKKPAPCIEVE. The S-palmitoyl cysteine moiety is linked to residue Cys355.

The protein belongs to the G-protein coupled receptor 1 family. As to quaternary structure, interacts with MAS1. Interacts with ARRB1. Interacts with FLNA (via filamin repeat 21); increases PKA-mediated phosphorylation of FLNA. In terms of processing, C-terminal Ser or Thr residues may be phosphorylated. As to expression, adrenal medulla, cortex and kidney.

It is found in the cell membrane. Receptor for angiotensin II, a vasoconstricting peptide, which acts as a key regulator of blood pressure and sodium retention by the kidney. The activated receptor in turn couples to G-alpha proteins G(q) (GNAQ, GNA11, GNA14 or GNA15) and thus activates phospholipase C and increases the cytosolic Ca(2+) concentrations, which in turn triggers cellular responses such as stimulation of protein kinase C. This chain is Type-1 angiotensin II receptor (AGTR1), found in Bos taurus (Bovine).